Here is a 239-residue protein sequence, read N- to C-terminus: Fibroblast growth factor 3 (239 aa).

Positions 1–17 (MGLIWLLLLSLLEPGWP) are cleaved as a signal peptide. The N-linked (GlcNAc...) asparagine glycan is linked to N65. The segment at 193–239 (QLQSGLPRPPGKGVQPRRRRQKQSPDNLEPSHVQASRLGSQLEASAH) is disordered. Residues 225 to 239 (VQASRLGSQLEASAH) are compositionally biased toward polar residues.

Belongs to the heparin-binding growth factors family. As to quaternary structure, interacts with FGFR1 and FGFR2. Affinity between fibroblast growth factors (FGFs) and their receptors is increased by heparan sulfate glycosaminoglycans that function as coreceptors.

The protein resides in the secreted. In terms of biological role, plays an important role in the regulation of embryonic development, cell proliferation, and cell differentiation. Required for normal ear development. This Homo sapiens (Human) protein is Fibroblast growth factor 3 (FGF3).